The primary structure comprises 152 residues: Large ribosomal subunit protein bL9 (152 aa).

This sequence belongs to the bacterial ribosomal protein bL9 family.

Its function is as follows. Binds to the 23S rRNA. In Synechococcus sp. (strain WH7803), this protein is Large ribosomal subunit protein bL9.